We begin with the raw amino-acid sequence, 63 residues long: Phylloseptin-Az1 (63 aa).

The N-terminal stretch at 1–19 is a signal peptide; that stretch reads LKKSLFLVVFLGLATLSIC. The propeptide occupies 20–41; the sequence is EEEKRETEEEEYNQGEDDKSEE. At Phe62 the chain carries Phenylalanine amide.

In terms of tissue distribution, expressed by the skin glands.

Its subcellular location is the secreted. Its function is as follows. Has antimicrobial activity. This chain is Phylloseptin-Az1, found in Pithecopus azureus (Orange-legged monkey tree frog).